The following is a 357-amino-acid chain: DNA replication and repair protein RecF (357 aa).

30-37 (GANGSGKT) provides a ligand contact to ATP.

It belongs to the RecF family.

It localises to the cytoplasm. Its function is as follows. The RecF protein is involved in DNA metabolism; it is required for DNA replication and normal SOS inducibility. RecF binds preferentially to single-stranded, linear DNA. It also seems to bind ATP. In Salmonella arizonae (strain ATCC BAA-731 / CDC346-86 / RSK2980), this protein is DNA replication and repair protein RecF.